Reading from the N-terminus, the 113-residue chain is Large ribosomal subunit protein bL17 (113 aa).

This sequence belongs to the bacterial ribosomal protein bL17 family. In terms of assembly, part of the 50S ribosomal subunit. Contacts protein L32.

This Clostridium novyi (strain NT) protein is Large ribosomal subunit protein bL17.